The primary structure comprises 473 residues: BPI fold-containing family B member 3 (473 aa).

The signal sequence occupies residues 1-20 (MMLGVYTLLLLWGLATPCLG). Residue Asn-139 is glycosylated (N-linked (GlcNAc...) asparagine). A disulfide bond links Cys-161 and Cys-196.

Belongs to the BPI/LBP/Plunc superfamily. BPI/LBP family.

The protein localises to the secreted. In terms of biological role, may have the capacity to recognize and bind specific classes of odorants. May act as a carrier molecule, transporting odorants across the mucus layer to access receptor sites. May serve as a primary defense mechanism by recognizing and removing potentially harmful odorants or pathogenic microorganisms from the mucosa or clearing excess odorant from mucus to enable new odorant stimuli to be received. The sequence is that of BPI fold-containing family B member 3 from Mus musculus (Mouse).